The following is a 523-amino-acid chain: Ribosomal protein uS12 methylthiotransferase RimO (523 aa).

One can recognise an MTTase N-terminal domain in the interval 7–134; that stretch reads RRVALITLGC…IATHLAAVLA (128 aa). [4Fe-4S] cluster contacts are provided by cysteine 16, cysteine 52, cysteine 97, cysteine 192, cysteine 196, and cysteine 199. In terms of domain architecture, Radical SAM core spans 178-409; the sequence is LTAGPVAVLK…DLVEQLTAAR (232 aa). One can recognise a TRAM domain in the interval 411–492; the sequence is DARIGSRVQV…GVDLIAEFIA (82 aa).

It belongs to the methylthiotransferase family. RimO subfamily. The cofactor is [4Fe-4S] cluster.

It is found in the cytoplasm. It carries out the reaction L-aspartate(89)-[ribosomal protein uS12]-hydrogen + (sulfur carrier)-SH + AH2 + 2 S-adenosyl-L-methionine = 3-methylsulfanyl-L-aspartate(89)-[ribosomal protein uS12]-hydrogen + (sulfur carrier)-H + 5'-deoxyadenosine + L-methionine + A + S-adenosyl-L-homocysteine + 2 H(+). Its function is as follows. Catalyzes the methylthiolation of an aspartic acid residue of ribosomal protein uS12. The polypeptide is Ribosomal protein uS12 methylthiotransferase RimO (Frankia casuarinae (strain DSM 45818 / CECT 9043 / HFP020203 / CcI3)).